The chain runs to 891 residues: Receptor-like protein 50 (891 aa).

The signal sequence occupies residues 1–22 (MITIIWSLCLIFCLSNSILVIA). The Extracellular portion of the chain corresponds to 23-849 (KDLCLPDQRD…KEEKDKGLSW (827 aa)). 2 N-linked (GlcNAc...) asparagine glycosylation sites follow: N62 and N98. LRR repeat units follow at residues 105–130 (QHLQSLDLSYNDLSCTLPDSSGNFKY), 132–152 (RVLNLLGCNLFGEIPTSLRSL), 153–176 (SYLTDLDLSYNDDLTGEILDSMGN), 177–201 (LKHLRVLSLTSCKFTGKIPSSLGNL), 203–225 (YLTDLDLSWNYFTGELPDSMGNL), 226–249 (KSLRVLNLHRCNFFGKIPTSLGSL), and 250–272 (SNLTDLDISKNEFTSEGPDSMSS). N-linked (GlcNAc...) asparagine glycosylation is present at N200. N-linked (GlcNAc...) asparagine glycosylation is found at N251, N285, and N306. LRR repeat units follow at residues 286 to 309 (LSSLTNVDLSSNQFKAMLPSNMSS), 310 to 334 (LSKLEAFDISGNSFSGTIPSSLFML), 336 to 358 (SLIKLDLGTNDFSGPLKIGNISS), and 359 to 383 (PSNLQELYIGENNINGPIPRSILKL). Residue N355 is glycosylated (N-linked (GlcNAc...) asparagine). The LRR 12; degenerate repeat unit spans residues 384–407 (VGLSALSLSFWDTGGIVDFSIFLQ). LRR repeat units follow at residues 408 to 436 (LKSLRSLDLSGINLNISSSHHLPSHMMHL), 438 to 453 (LSSCNISQFPKFLENQ), 454 to 477 (TSLYHLDISANQIEGQVPEWLWRL), 478 to 504 (PTLRYVNIAQNAFSGELTMLPNPIYSF), 506 to 519 (ASDNKFSGEIPRAV), 520 to 544 (CEIGTLVLSNNNFSGSIPPCFEISN), 545 to 568 (KTLSILHLRNNSLSGVIPEESLHG), 570 to 591 (LRSLDVGSNRLSGQFPKSLINC), 593 to 614 (YLQFLNVEENRINDTFPSWLKS), 615 to 641 (LPNLQLLVLRSNEFHGPIFSPGDSLSF), 642 to 665 (SKLRFFDISENRFSGVLPSDYFVG), 712 to 736 (FEIYKTIDVSGNRLEGDIPESIGIL), 737 to 760 (KELIVLNMSNNAFTGHIPPSLSNL), 761 to 784 (SNLQSLDLSQNRLSGSIPGELGEL), and 786 to 809 (FLARMNFSYNMLEGPIPQGTQIQS). Residues N422, N442, and N452 are each glycosylated (N-linked (GlcNAc...) asparagine). Residues N531, N544, N554, N590, and N605 are each glycosylated (N-linked (GlcNAc...) asparagine). N743 and N759 each carry an N-linked (GlcNAc...) asparagine glycan. Residues N791 and N811 are each glycosylated (N-linked (GlcNAc...) asparagine). The chain crosses the membrane as a helical span at residues 850 to 870 (VAAAIGYVPGLFCGLAIGHIL). Topologically, residues 871–891 (TSYKRDWFMRIFSCFSSPLKK) are cytoplasmic.

The protein belongs to the RLP family.

Its subcellular location is the cell membrane. The chain is Receptor-like protein 50 from Arabidopsis thaliana (Mouse-ear cress).